Reading from the N-terminus, the 243-residue chain is tRNA (guanine-N(1)-)-methyltransferase (243 aa).

S-adenosyl-L-methionine-binding positions include Gly111 and 130 to 135 (IGDYVL).

This sequence belongs to the RNA methyltransferase TrmD family. As to quaternary structure, homodimer.

Its subcellular location is the cytoplasm. It carries out the reaction guanosine(37) in tRNA + S-adenosyl-L-methionine = N(1)-methylguanosine(37) in tRNA + S-adenosyl-L-homocysteine + H(+). Specifically methylates guanosine-37 in various tRNAs. The sequence is that of tRNA (guanine-N(1)-)-methyltransferase from Acholeplasma laidlawii (strain PG-8A).